Here is a 180-residue protein sequence, read N- to C-terminus: Large ribosomal subunit protein uL5 (180 aa).

This sequence belongs to the universal ribosomal protein uL5 family. As to quaternary structure, part of the 50S ribosomal subunit; part of the 5S rRNA/L5/L18/L25 subcomplex. Contacts the 5S rRNA and the P site tRNA. Forms a bridge to the 30S subunit in the 70S ribosome.

This is one of the proteins that bind and probably mediate the attachment of the 5S RNA into the large ribosomal subunit, where it forms part of the central protuberance. In the 70S ribosome it contacts protein S13 of the 30S subunit (bridge B1b), connecting the 2 subunits; this bridge is implicated in subunit movement. Contacts the P site tRNA; the 5S rRNA and some of its associated proteins might help stabilize positioning of ribosome-bound tRNAs. The sequence is that of Large ribosomal subunit protein uL5 from Stenotrophomonas maltophilia (strain R551-3).